Here is a 219-residue protein sequence, read N- to C-terminus: Probable transcriptional regulator flp (219 aa).

The 69-residue stretch at 144–212 folds into the HTH crp-type domain; sequence DSINVRLTHY…GKQVRILNAE (69 aa). The segment at residues 191–210 is a DNA-binding region (H-T-H motif); it reads KRLAEEKLIERSGKQVRILN.

This Lacticaseibacillus casei (Lactobacillus casei) protein is Probable transcriptional regulator flp (flp).